The primary structure comprises 198 residues: Nucleoside triphosphate pyrophosphatase (198 aa).

The Proton acceptor role is filled by D72.

It belongs to the Maf family. The cofactor is a divalent metal cation.

The protein resides in the cytoplasm. It catalyses the reaction a ribonucleoside 5'-triphosphate + H2O = a ribonucleoside 5'-phosphate + diphosphate + H(+). It carries out the reaction a 2'-deoxyribonucleoside 5'-triphosphate + H2O = a 2'-deoxyribonucleoside 5'-phosphate + diphosphate + H(+). Its function is as follows. Nucleoside triphosphate pyrophosphatase. May have a dual role in cell division arrest and in preventing the incorporation of modified nucleotides into cellular nucleic acids. This is Nucleoside triphosphate pyrophosphatase from Corynebacterium aurimucosum (strain ATCC 700975 / DSM 44827 / CIP 107346 / CN-1) (Corynebacterium nigricans).